A 119-amino-acid chain; its full sequence is Non-specific lipid-transfer protein 3 (119 aa).

Residues 1 to 24 (MARSMKLACVVLAMCMLVAPMAEA) form the signal peptide. 4 disulfides stabilise this stretch: C28/C77, C38/C54, C55/C100, and C75/C114.

It belongs to the plant LTP family. As to expression, expressed in roots, stem, leaves and tendrils of the mature plant.

Functionally, plant non-specific lipid-transfer proteins transfer phospholipids as well as galactolipids across membranes. May play a role in wax or cutin deposition in the cell walls of expanding epidermal cells and certain secretory tissues. The sequence is that of Non-specific lipid-transfer protein 3 from Pisum sativum (Garden pea).